Here is a 309-residue protein sequence, read N- to C-terminus: Probable RuBisCO transcriptional regulator (309 aa).

The 58-residue stretch at 5–62 (FTLQQLRILKAIATEKSFTRAAEVLFVSQPSLSKQIKTLESRLNISLLNRENNIVSLT) folds into the HTH lysR-type domain. A DNA-binding region (H-T-H motif) is located at residues 22-41 (FTRAAEVLFVSQPSLSKQIK).

Belongs to the LysR transcriptional regulatory family.

It is found in the plastid. It localises to the chloroplast. In terms of biological role, trans-acting transcriptional regulator of RuBisCO genes (rbcL and rbcS) expression. In Trieres chinensis (Marine centric diatom), this protein is Probable RuBisCO transcriptional regulator (rbcR).